The following is a 211-amino-acid chain: Thiamine-phosphate synthase (211 aa).

Residues 38-42 (QLREK) and asparagine 70 contribute to the 4-amino-2-methyl-5-(diphosphooxymethyl)pyrimidine site. Residues aspartate 71 and aspartate 90 each coordinate Mg(2+). Residue serine 109 coordinates 4-amino-2-methyl-5-(diphosphooxymethyl)pyrimidine. 135 to 137 (TST) is a binding site for 2-[(2R,5Z)-2-carboxy-4-methylthiazol-5(2H)-ylidene]ethyl phosphate. Lysine 138 serves as a coordination point for 4-amino-2-methyl-5-(diphosphooxymethyl)pyrimidine. 2-[(2R,5Z)-2-carboxy-4-methylthiazol-5(2H)-ylidene]ethyl phosphate-binding positions include glycine 165 and 185 to 186 (IS).

Belongs to the thiamine-phosphate synthase family. Requires Mg(2+) as cofactor.

It carries out the reaction 2-[(2R,5Z)-2-carboxy-4-methylthiazol-5(2H)-ylidene]ethyl phosphate + 4-amino-2-methyl-5-(diphosphooxymethyl)pyrimidine + 2 H(+) = thiamine phosphate + CO2 + diphosphate. The catalysed reaction is 2-(2-carboxy-4-methylthiazol-5-yl)ethyl phosphate + 4-amino-2-methyl-5-(diphosphooxymethyl)pyrimidine + 2 H(+) = thiamine phosphate + CO2 + diphosphate. The enzyme catalyses 4-methyl-5-(2-phosphooxyethyl)-thiazole + 4-amino-2-methyl-5-(diphosphooxymethyl)pyrimidine + H(+) = thiamine phosphate + diphosphate. It functions in the pathway cofactor biosynthesis; thiamine diphosphate biosynthesis; thiamine phosphate from 4-amino-2-methyl-5-diphosphomethylpyrimidine and 4-methyl-5-(2-phosphoethyl)-thiazole: step 1/1. In terms of biological role, condenses 4-methyl-5-(beta-hydroxyethyl)thiazole monophosphate (THZ-P) and 2-methyl-4-amino-5-hydroxymethyl pyrimidine pyrophosphate (HMP-PP) to form thiamine monophosphate (TMP). The protein is Thiamine-phosphate synthase of Clostridium acetobutylicum (strain ATCC 824 / DSM 792 / JCM 1419 / IAM 19013 / LMG 5710 / NBRC 13948 / NRRL B-527 / VKM B-1787 / 2291 / W).